We begin with the raw amino-acid sequence, 206 residues long: MILSDKDIFDYVNSKRVLIEPFNSKFVGPCSYDVTLGSEFIKYKEDVYDLKKSLSHNKFEIENSIMVCPLNHHLDETIIENYKEKYNVDCIVSGGLLGTTNEYVELPNDVCAQYQGRSSFGRVFLQTHQTAGWIDSGFRGKITLEIVAYDKPVILYKNQRVGQLIFSKSLSPADVGYSDRKYSKYAGQKSVMASLIKKDFEIDEEE.

Residues 117 to 122 (RSSFGR), Asp135, 143 to 145 (TLE), Gln163, Tyr177, Lys184, and Gln188 each bind dCTP. The active-site Proton donor/acceptor is the Glu145.

This sequence belongs to the dCTP deaminase family. In terms of assembly, homotrimer.

The catalysed reaction is dCTP + 2 H2O = dUMP + NH4(+) + diphosphate. It participates in pyrimidine metabolism; dUMP biosynthesis; dUMP from dCTP: step 1/1. Functionally, bifunctional enzyme that catalyzes both the deamination of dCTP to dUTP and the hydrolysis of dUTP to dUMP without releasing the toxic dUTP intermediate. The sequence is that of dCTP deaminase, dUMP-forming from Methanococcus maripaludis (strain C7 / ATCC BAA-1331).